The primary structure comprises 451 residues: Phosphoglucosamine mutase (451 aa).

The Phosphoserine intermediate role is filled by serine 103. 4 residues coordinate Mg(2+): serine 103, aspartate 243, aspartate 245, and aspartate 247. Position 103 is a phosphoserine (serine 103).

It belongs to the phosphohexose mutase family. Requires Mg(2+) as cofactor. Activated by phosphorylation.

The enzyme catalyses alpha-D-glucosamine 1-phosphate = D-glucosamine 6-phosphate. Functionally, catalyzes the conversion of glucosamine-6-phosphate to glucosamine-1-phosphate. This is Phosphoglucosamine mutase from Lactobacillus gasseri (strain ATCC 33323 / DSM 20243 / BCRC 14619 / CIP 102991 / JCM 1131 / KCTC 3163 / NCIMB 11718 / NCTC 13722 / AM63).